The following is a 372-amino-acid chain: UDP-N-acetylglucosamine--N-acetylmuramyl-(pentapeptide) pyrophosphoryl-undecaprenol N-acetylglucosamine transferase (372 aa).

UDP-N-acetyl-alpha-D-glucosamine-binding positions include 10–12, N124, R166, S196, I256, and Q301; that span reads TGG.

The protein belongs to the glycosyltransferase 28 family. MurG subfamily.

The protein localises to the cell membrane. It carries out the reaction di-trans,octa-cis-undecaprenyl diphospho-N-acetyl-alpha-D-muramoyl-L-alanyl-D-glutamyl-meso-2,6-diaminopimeloyl-D-alanyl-D-alanine + UDP-N-acetyl-alpha-D-glucosamine = di-trans,octa-cis-undecaprenyl diphospho-[N-acetyl-alpha-D-glucosaminyl-(1-&gt;4)]-N-acetyl-alpha-D-muramoyl-L-alanyl-D-glutamyl-meso-2,6-diaminopimeloyl-D-alanyl-D-alanine + UDP + H(+). Its pathway is cell wall biogenesis; peptidoglycan biosynthesis. Its function is as follows. Cell wall formation. Catalyzes the transfer of a GlcNAc subunit on undecaprenyl-pyrophosphoryl-MurNAc-pentapeptide (lipid intermediate I) to form undecaprenyl-pyrophosphoryl-MurNAc-(pentapeptide)GlcNAc (lipid intermediate II). In Desulforamulus reducens (strain ATCC BAA-1160 / DSM 100696 / MI-1) (Desulfotomaculum reducens), this protein is UDP-N-acetylglucosamine--N-acetylmuramyl-(pentapeptide) pyrophosphoryl-undecaprenol N-acetylglucosamine transferase.